The primary structure comprises 180 residues: ATP-dependent protease subunit HslV (180 aa).

Threonine 7 is an active-site residue. Positions 165, 168, and 171 each coordinate Na(+).

Belongs to the peptidase T1B family. HslV subfamily. As to quaternary structure, a double ring-shaped homohexamer of HslV is capped on each side by a ring-shaped HslU homohexamer. The assembly of the HslU/HslV complex is dependent on binding of ATP.

It is found in the cytoplasm. The catalysed reaction is ATP-dependent cleavage of peptide bonds with broad specificity.. With respect to regulation, allosterically activated by HslU binding. In terms of biological role, protease subunit of a proteasome-like degradation complex believed to be a general protein degrading machinery. The chain is ATP-dependent protease subunit HslV from Geobacillus sp. (strain WCH70).